Reading from the N-terminus, the 499-residue chain is Diacylglycerol kinase 1 (499 aa).

One can recognise a DAGKc domain in the interval 41–194 (APCCPVVVFI…IDSWHIIMRM (154 aa)). Positions 442–479 (PCKSKSVNDPSSPMCCSNHDDDERNSLEDEDEWEEGRK) are disordered. Positions 446-456 (KSVNDPSSPMC) are enriched in polar residues. Residues 459-468 (NHDDDERNSL) are compositionally biased toward basic and acidic residues.

The protein belongs to the eukaryotic diacylglycerol kinase family. Monomer. As to expression, highly expressed in roots.

It carries out the reaction a 1,2-diacyl-sn-glycerol + ATP = a 1,2-diacyl-sn-glycero-3-phosphate + ADP + H(+). Functionally, phosphorylates the second messenger diacylglycerol (DAG) to generate phosphatidic acid (PA), another important signaling molecule. PA is required for plant development and responses to abiotic stress. May play a role in disease resistance responses to pathogen attack. Modulates root architecture by regulating the ratio of DAG and PA, which have opposite effect on the promotion or suppression of lateral roots vs seminal roots. Suppresses lateral root number, but promotes seminal root and crown root thickness. The protein is Diacylglycerol kinase 1 of Oryza sativa subsp. japonica (Rice).